A 449-amino-acid polypeptide reads, in one-letter code: MLDLLKQTIFTRDFIFILILLGFILVVTLLLLENRRDNIQLKQINQKVKDLIAGDYSKVLDMQGGSEITNITNNLNDLSEVIRLTQENLEQESKRLNSILFYMTDGVLATNRRGQIIMINDTAKKQLGLVKEDVLNRSILELLKIEENYELRDLITQSPELLLDSQDINGEYLNLRVRFALIRRESGFISGLVAVLHDTTEQEKEERERRLFVSNVSHELRTPLTSVKSYLEALDEGALCETVAPDFIKVSLDETNRMMRMVTDLLHLSRIDNATSHLDVELINFTAFITFILNRFDKMKGQEKEKKYELVRDYPINSIWMEIDTDKMTQVVDNILNNAIKYSPDGGKITVRMKTTEDQMILSISDHGLGIPKQDLPRIFDRFYRVDRARSRAQGGTGLGLSIAKEIIKQHKGFIWAKSEYGKGSTFTIVLPYDKDAVKEEVWEDEVED.

Topologically, residues Met-1–Asp-13 are extracellular. The chain crosses the membrane as a helical span at residues Phe-14 to Asn-34. One can recognise an HAMP domain in the interval Arg-35–Glu-87. The Cytoplasmic portion of the chain corresponds to Arg-35–Asp-449. The 67-residue stretch at Glu-92–Ser-158 folds into the PAS domain. In terms of domain architecture, PAC spans Gln-157–Leu-211. Residues Asn-215–Lys-435 enclose the Histidine kinase domain. A Phosphohistidine modification is found at His-218.

As to quaternary structure, may form homodimers. May interact with serine/threonine-protein kinase StkP; the interaction may play a role in regulating Walk signal transduction. In terms of processing, autophosphorylated.

It localises to the membrane. The catalysed reaction is ATP + protein L-histidine = ADP + protein N-phospho-L-histidine.. Member of the two-component regulatory system WalK/WalR that regulates genes involved in cell wall metabolism. Functions as a sensor protein kinase which is autophosphorylated at a histidine residue and transfers its phosphate group to WalR. In turn, WalR binds to the upstream promoter regions of target genes to positively and negatively regulate their expression. Required to maintain expression of WalRK regulon genes in exponentially growing cells, including peptidoglycan hydrolase pcsB. Phosphorylates WalR and also capable of dephosphorylation of WalR. WalK phosphatase activity is probably involved in preventing cross-talk from PnpS and other non-cognate sensor kinases during exponential growth. May be considered a potential virulence factor. The polypeptide is Sensor histidine protein kinase/phosphatase WalK (Streptococcus pneumoniae serotype 2 (strain D39 / NCTC 7466)).